Here is a 92-residue protein sequence, read N- to C-terminus: Large ribosomal subunit protein eL31 (92 aa).

N-acetylserine is present on serine 2.

This sequence belongs to the eukaryotic ribosomal protein eL31 family. As to quaternary structure, part of the 50S ribosomal subunit.

Its function is as follows. Binds to the 23S rRNA. Located at the polypeptide exit tunnel on the outside of the subunit. The polypeptide is Large ribosomal subunit protein eL31 (rpl31e) (Haloarcula marismortui (strain ATCC 43049 / DSM 3752 / JCM 8966 / VKM B-1809) (Halobacterium marismortui)).